The primary structure comprises 260 residues: Ribosomal RNA small subunit methyltransferase J (260 aa).

S-adenosyl-L-methionine-binding positions include 125–126 (ER) and D179.

Belongs to the methyltransferase superfamily. RsmJ family.

The protein localises to the cytoplasm. It catalyses the reaction guanosine(1516) in 16S rRNA + S-adenosyl-L-methionine = N(2)-methylguanosine(1516) in 16S rRNA + S-adenosyl-L-homocysteine + H(+). Specifically methylates the guanosine in position 1516 of 16S rRNA. The sequence is that of Ribosomal RNA small subunit methyltransferase J from Pseudomonas fluorescens (strain ATCC BAA-477 / NRRL B-23932 / Pf-5).